Reading from the N-terminus, the 556-residue chain is Urocanate hydratase (556 aa).

NAD(+)-binding positions include 52-53 (GG), Gln130, 176-178 (GMG), Glu196, Arg201, 242-243 (NA), 263-267 (QTSAH), 273-274 (YL), and Tyr322. Cys410 is a catalytic residue. Gly492 lines the NAD(+) pocket.

The protein belongs to the urocanase family. It depends on NAD(+) as a cofactor.

The protein localises to the cytoplasm. The catalysed reaction is 4-imidazolone-5-propanoate = trans-urocanate + H2O. It functions in the pathway amino-acid degradation; L-histidine degradation into L-glutamate; N-formimidoyl-L-glutamate from L-histidine: step 2/3. In terms of biological role, catalyzes the conversion of urocanate to 4-imidazolone-5-propionate. In Bradyrhizobium sp. (strain BTAi1 / ATCC BAA-1182), this protein is Urocanate hydratase.